Consider the following 296-residue polypeptide: 4-diphosphocytidyl-2-C-methyl-D-erythritol kinase (296 aa).

The active site involves K11. 96-106 lines the ATP pocket; it reads PVSSGLAGGSA. D136 is an active-site residue.

It belongs to the GHMP kinase family. IspE subfamily.

The catalysed reaction is 4-CDP-2-C-methyl-D-erythritol + ATP = 4-CDP-2-C-methyl-D-erythritol 2-phosphate + ADP + H(+). It participates in isoprenoid biosynthesis; isopentenyl diphosphate biosynthesis via DXP pathway; isopentenyl diphosphate from 1-deoxy-D-xylulose 5-phosphate: step 3/6. Catalyzes the phosphorylation of the position 2 hydroxy group of 4-diphosphocytidyl-2C-methyl-D-erythritol. The polypeptide is 4-diphosphocytidyl-2-C-methyl-D-erythritol kinase (Anaplasma phagocytophilum (strain HZ)).